Reading from the N-terminus, the 2055-residue chain is Citron rho-interacting kinase (2055 aa).

The Protein kinase domain occupies 97-359 (FEVRSLVGCG…FEGLCCHPFF (263 aa)). Residues 103 to 111 (VGCGHFAEV) and Lys-126 each bind ATP. Catalysis depends on Asp-221, which acts as the Proton acceptor. The AGC-kinase C-terminal domain maps to 360 to 430 (ARTDWNNIRN…SKALGYLGRS (71 aa)). The segment at 375–398 (VPTLKSDDDTSNFDEPEKNSWVSS) is disordered. Coiled coils occupy residues 457–747 (LQDS…AQVS), 773–1238 (IKKD…LEYQ), and 1284–1318 (YNEL…AREE). The segment at 1349-1376 (PEHQPSAMSLLAPPSSRRKEASTPEEFS) is disordered. A compositionally biased stretch (low complexity) spans 1353 to 1363 (PSAMSLLAPPS). The segment covering 1365–1376 (RRKEASTPEEFS) has biased composition (basic and acidic residues). The segment at 1388 to 1437 (PHRFNVGLNMRATKCAVCLDTVHFGRQASKCLECQVMCHPKCSTCLPATC) adopts a Phorbol-ester/DAG-type zinc-finger fold. Residues 1469-1589 (SLHLEGWMKV…WVTALESVVA (121 aa)) enclose the PH domain. One can recognise a CNH domain in the interval 1617–1907 (RLDMNCTLPF…RYLGPAISSG (291 aa)). The interval 1932–2040 (SGTEQHRVPS…RGRLPAGAVR (109 aa)) is disordered. Residues 1939–1948 (VPSTSRSSPN) are compositionally biased toward polar residues. Over residues 1974 to 2031 (SHPREPSTPHRYRDREGRTELRRDKSPGRPLEREKSPGRMLSTRRERSPGRLFEDSSR) the composition is skewed to basic and acidic residues.

Belongs to the protein kinase superfamily. AGC Ser/Thr protein kinase family. Homodimer. Directly interacts with KIF14 depending on the activation state (stronger interaction with the kinase-dead form). Interacts with TTC3.

The protein resides in the cytoplasm. It catalyses the reaction L-seryl-[protein] + ATP = O-phospho-L-seryl-[protein] + ADP + H(+). The catalysed reaction is L-threonyl-[protein] + ATP = O-phospho-L-threonyl-[protein] + ADP + H(+). Plays a role in cytokinesis. Required for KIF14 localization to the central spindle and midbody. Putative RHO/RAC effector that binds to the GTP-bound forms of RHO and RAC1. It probably binds p21 with a tighter specificity in vivo. Displays serine/threonine protein kinase activity. Plays an important role in the regulation of cytokinesis and the development of the central nervous system. Phosphorylates MYL9/MLC2. In Rattus norvegicus (Rat), this protein is Citron rho-interacting kinase.